The following is a 327-amino-acid chain: Undecaprenyl-phosphate 4-deoxy-4-formamido-L-arabinose transferase (327 aa).

2 helical membrane passes run 236 to 256 (LSLV…LLVV) and 270 to 290 (VFTL…GMGL).

This sequence belongs to the glycosyltransferase 2 family.

The protein resides in the cell inner membrane. It carries out the reaction UDP-4-deoxy-4-formamido-beta-L-arabinose + di-trans,octa-cis-undecaprenyl phosphate = 4-deoxy-4-formamido-alpha-L-arabinopyranosyl di-trans,octa-cis-undecaprenyl phosphate + UDP. It functions in the pathway glycolipid biosynthesis; 4-amino-4-deoxy-alpha-L-arabinose undecaprenyl phosphate biosynthesis; 4-amino-4-deoxy-alpha-L-arabinose undecaprenyl phosphate from UDP-4-deoxy-4-formamido-beta-L-arabinose and undecaprenyl phosphate: step 1/2. The protein operates within bacterial outer membrane biogenesis; lipopolysaccharide biosynthesis. Catalyzes the transfer of 4-deoxy-4-formamido-L-arabinose from UDP to undecaprenyl phosphate. The modified arabinose is attached to lipid A and is required for resistance to polymyxin and cationic antimicrobial peptides. The polypeptide is Undecaprenyl-phosphate 4-deoxy-4-formamido-L-arabinose transferase (Yersinia enterocolitica serotype O:8 / biotype 1B (strain NCTC 13174 / 8081)).